The sequence spans 506 residues: Maturase K (506 aa).

This sequence belongs to the intron maturase 2 family. MatK subfamily.

It is found in the plastid. Its subcellular location is the chloroplast. Functionally, usually encoded in the trnK tRNA gene intron. Probably assists in splicing its own and other chloroplast group II introns. The polypeptide is Maturase K (Trifolium spumosum (Mediterranean clover)).